The primary structure comprises 1607 residues: Putative molluscan insulin-related peptide(s) receptor (1607 aa).

The first 35 residues, Met-1–Ala-35, serve as a signal peptide directing secretion. N-linked (GlcNAc...) asparagine glycans are attached at residues Asn-82, Asn-188, Asn-245, Asn-275, Asn-332, Asn-343, Asn-495, Asn-520, Asn-663, Asn-710, Asn-778, Asn-796, Asn-802, Asn-868, Asn-879, Asn-940, and Asn-953. Fibronectin type-III domains lie at His-517–Phe-632, Glu-636–Glu-726, and Leu-756–Ser-861. Residues Glu-698–Thr-975 are Extracellular-facing. A Fibronectin type-III 4 domain is found at Thr-870–Pro-967. The helical transmembrane segment at Leu-976–Ala-996 threads the bilayer. The Cytoplasmic segment spans residues Cys-997–Leu-1607. One can recognise a Protein kinase domain in the interval Ile-1037–Leu-1308. Residues Leu-1043 to Val-1051 and Lys-1072 each bind ATP. The Proton acceptor role is filled by Asp-1173. Tyr-1199 is subject to Phosphotyrosine; by autocatalysis. Disordered stretches follow at residues Gly-1328–Glu-1352 and Thr-1501–Trp-1539. Residues Asn-1503–Glu-1515 are compositionally biased toward polar residues. The segment covering Ser-1524 to Ser-1538 has biased composition (low complexity).

It belongs to the protein kinase superfamily. Tyr protein kinase family. Insulin receptor subfamily. Probable tetramer of 2 alpha and 2 beta chains linked by disulfide bonds. The alpha chains contribute to the formation of the ligand-binding domain, while the beta chains carry the kinase domain. Mn(2+) serves as cofactor.

Its subcellular location is the membrane. The catalysed reaction is L-tyrosyl-[protein] + ATP = O-phospho-L-tyrosyl-[protein] + ADP + H(+). Functionally, this receptor probably binds to the four different molluscan insulin-related peptides and has a tyrosine-protein kinase activity. The chain is Putative molluscan insulin-related peptide(s) receptor from Lymnaea stagnalis (Great pond snail).